The primary structure comprises 643 residues: 1-deoxy-D-xylulose-5-phosphate synthase (643 aa).

Thiamine diphosphate-binding positions include H78 and 119-121 (AHS). Mg(2+) is bound at residue D150. Thiamine diphosphate-binding positions include 151 to 152 (GS), N179, Y288, and E370. Position 179 (N179) interacts with Mg(2+).

The protein belongs to the transketolase family. DXPS subfamily. In terms of assembly, homodimer. Requires Mg(2+) as cofactor. Thiamine diphosphate serves as cofactor.

The catalysed reaction is D-glyceraldehyde 3-phosphate + pyruvate + H(+) = 1-deoxy-D-xylulose 5-phosphate + CO2. It functions in the pathway metabolic intermediate biosynthesis; 1-deoxy-D-xylulose 5-phosphate biosynthesis; 1-deoxy-D-xylulose 5-phosphate from D-glyceraldehyde 3-phosphate and pyruvate: step 1/1. In terms of biological role, catalyzes the acyloin condensation reaction between C atoms 2 and 3 of pyruvate and glyceraldehyde 3-phosphate to yield 1-deoxy-D-xylulose-5-phosphate (DXP). This Brucella abortus (strain S19) protein is 1-deoxy-D-xylulose-5-phosphate synthase.